Reading from the N-terminus, the 179-residue chain is Large ribosomal subunit protein uL5 (179 aa).

This sequence belongs to the universal ribosomal protein uL5 family. As to quaternary structure, part of the 50S ribosomal subunit; part of the 5S rRNA/L5/L18/L25 subcomplex. Contacts the 5S rRNA and the P site tRNA. Forms a bridge to the 30S subunit in the 70S ribosome.

This is one of the proteins that bind and probably mediate the attachment of the 5S RNA into the large ribosomal subunit, where it forms part of the central protuberance. In the 70S ribosome it contacts protein S13 of the 30S subunit (bridge B1b), connecting the 2 subunits; this bridge is implicated in subunit movement. Contacts the P site tRNA; the 5S rRNA and some of its associated proteins might help stabilize positioning of ribosome-bound tRNAs. The chain is Large ribosomal subunit protein uL5 from Vesicomyosocius okutanii subsp. Calyptogena okutanii (strain HA).